The following is a 557-amino-acid chain: NADP-dependent malic enzyme (557 aa).

Y88 serves as the catalytic Proton donor. R141 is an NADP(+) binding site. K159 functions as the Proton acceptor in the catalytic mechanism. A divalent metal cation contacts are provided by E231, D232, and D255. D255 serves as a coordination point for NADP(+). Residue S322 is modified to Phosphoserine. NADP(+) is bound at residue N394.

This sequence belongs to the malic enzymes family. In terms of assembly, homotetramer. The cofactor is Mg(2+). Requires Mn(2+) as cofactor.

The protein resides in the cytoplasm. The catalysed reaction is (S)-malate + NADP(+) = pyruvate + CO2 + NADPH. The enzyme catalyses oxaloacetate + H(+) = pyruvate + CO2. In terms of biological role, catalyzes the oxidative decarboxylation of (S)-malate in the presence of NADP(+) and divalent metal ions, and decarboxylation of oxaloacetate. This Sus scrofa (Pig) protein is NADP-dependent malic enzyme (ME1).